The following is a 636-amino-acid chain: 1-deoxy-D-xylulose-5-phosphate synthase (636 aa).

Thiamine diphosphate-binding positions include H74 and A115–S117. Position 146 (D146) interacts with Mg(2+). Thiamine diphosphate is bound by residues G147–S148, N176, Y287, and E369. N176 is a Mg(2+) binding site.

This sequence belongs to the transketolase family. DXPS subfamily. In terms of assembly, homodimer. Requires Mg(2+) as cofactor. Thiamine diphosphate is required as a cofactor.

The enzyme catalyses D-glyceraldehyde 3-phosphate + pyruvate + H(+) = 1-deoxy-D-xylulose 5-phosphate + CO2. It functions in the pathway metabolic intermediate biosynthesis; 1-deoxy-D-xylulose 5-phosphate biosynthesis; 1-deoxy-D-xylulose 5-phosphate from D-glyceraldehyde 3-phosphate and pyruvate: step 1/1. In terms of biological role, catalyzes the acyloin condensation reaction between C atoms 2 and 3 of pyruvate and glyceraldehyde 3-phosphate to yield 1-deoxy-D-xylulose-5-phosphate (DXP). The sequence is that of 1-deoxy-D-xylulose-5-phosphate synthase from Polaromonas naphthalenivorans (strain CJ2).